The primary structure comprises 142 residues: 3-hydroxyacyl-[acyl-carrier-protein] dehydratase FabZ (142 aa).

Residue histidine 48 is part of the active site.

This sequence belongs to the thioester dehydratase family. FabZ subfamily.

The protein resides in the cytoplasm. It carries out the reaction a (3R)-hydroxyacyl-[ACP] = a (2E)-enoyl-[ACP] + H2O. Functionally, involved in unsaturated fatty acids biosynthesis. Catalyzes the dehydration of short chain beta-hydroxyacyl-ACPs and long chain saturated and unsaturated beta-hydroxyacyl-ACPs. In Prochlorococcus marinus (strain MIT 9313), this protein is 3-hydroxyacyl-[acyl-carrier-protein] dehydratase FabZ.